Here is a 70-residue protein sequence, read N- to C-terminus: MTTIRLKENEPFEVALRRFKRTIEKNGLLPELRAREFYEKPTAERKRKRDAAVKRNYKRLRSQMLPKKLY.

Belongs to the bacterial ribosomal protein bS21 family.

The protein is Small ribosomal subunit protein bS21B of Cupriavidus metallidurans (strain ATCC 43123 / DSM 2839 / NBRC 102507 / CH34) (Ralstonia metallidurans).